The chain runs to 284 residues: 2-dehydro-3-deoxyphosphooctonate aldolase (284 aa).

Belongs to the KdsA family.

It localises to the cytoplasm. It carries out the reaction D-arabinose 5-phosphate + phosphoenolpyruvate + H2O = 3-deoxy-alpha-D-manno-2-octulosonate-8-phosphate + phosphate. Its pathway is carbohydrate biosynthesis; 3-deoxy-D-manno-octulosonate biosynthesis; 3-deoxy-D-manno-octulosonate from D-ribulose 5-phosphate: step 2/3. It functions in the pathway bacterial outer membrane biogenesis; lipopolysaccharide biosynthesis. This is 2-dehydro-3-deoxyphosphooctonate aldolase from Serratia proteamaculans (strain 568).